The following is a 158-amino-acid chain: Urease accessory protein UreE (158 aa).

This sequence belongs to the UreE family.

The protein resides in the cytoplasm. In terms of biological role, involved in urease metallocenter assembly. Binds nickel. Probably functions as a nickel donor during metallocenter assembly. The polypeptide is Urease accessory protein UreE (Klebsiella pneumoniae (strain 342)).